We begin with the raw amino-acid sequence, 451 residues long: Secreted RxLR effector protein 70 (451 aa).

A signal peptide spans 1-17; the sequence is MRGAYYIITALLVVASS. The RxLR-dEER motif lies at 48-65; sequence RFLRESRDVHDDLANEER. The disordered stretch occupies residues 303–336; it reads DAPSNSKHTLGGNKDSSSATTLHKHSKGLSSRPF. A compositionally biased stretch (polar residues) spans 305–323; that stretch reads PSNSKHTLGGNKDSSSATT.

Belongs to the RxLR effector family.

The protein resides in the secreted. The protein localises to the host nucleus. Secreted effector that completely suppresses the host cell death induced by cell death-inducing proteins. This Plasmopara viticola (Downy mildew of grapevine) protein is Secreted RxLR effector protein 70.